Here is a 608-residue protein sequence, read N- to C-terminus: Tyrosyl-DNA phosphodiesterase 1 (608 aa).

Positions 1–101 (MSQEGDYGRW…SDDELQPEMP (101 aa)) are disordered. Ser61 bears the Phosphoserine mark. The residue at position 147 (Thr147) is a Phosphothreonine. Position 148 is a phosphoserine (Ser148). Residue His263 is the Nucleophile of the active site. Lys265 contacts substrate. The segment at 400 to 403 (SVGS) is interaction with DNA. His493 functions as the Proton donor/acceptor in the catalytic mechanism. A substrate-binding site is contributed by Lys495.

It belongs to the tyrosyl-DNA phosphodiesterase family. As to quaternary structure, monomer. Phosphorylated on serine and/or threonine residues, but not on tyrosine residues. As to expression, ubiquitously expressed. Similar expression throughout the central nervous system (whole brain, amygdala, caudate nucleus, cerebellum, cerebral cortex, frontal lobe, hippocampus, medulla oblongata, occipital lobe, putamen, substantia nigra, temporal lobe, thalamus, nucleus accumbens and spinal cord) and increased expression in testis and thymus.

It localises to the nucleus. The protein localises to the cytoplasm. DNA repair enzyme that can remove a variety of covalent adducts from DNA through hydrolysis of a 3'-phosphodiester bond, giving rise to DNA with a free 3' phosphate. Catalyzes the hydrolysis of dead-end complexes between DNA and the topoisomerase I active site tyrosine residue. Hydrolyzes 3'-phosphoglycolates on protruding 3' ends on DNA double-strand breaks due to DNA damage by radiation and free radicals. Acts on blunt-ended double-strand DNA breaks and on single-stranded DNA. Has low 3'exonuclease activity and can remove a single nucleoside from the 3'end of DNA and RNA molecules with 3'hydroxyl groups. Has no exonuclease activity towards DNA or RNA with a 3'phosphate. This chain is Tyrosyl-DNA phosphodiesterase 1 (TDP1), found in Homo sapiens (Human).